The following is a 473-amino-acid chain: mRNA export factor ICP27 homolog (473 aa).

2 disordered regions span residues 57–81 (QELLTERPSPDSKNSQGDDDSNSIY) and 123–143 (QTKRPHGTGNRKQYHRRNFPM). Residues Cys362, His438, Cys442, and Cys447 each contribute to the Zn(2+) site. A CHC2-type zinc finger spans residues 362–447 (CKYGTEKRSM…HTRRCSDPAC (86 aa)).

Belongs to the HHV-1 ICP27 protein family. As to quaternary structure, associates in a complex with RNA, and host export factors NXF1/TAP and ALYREF; these interactions allow nuclear export of viral transcripts.

It localises to the host cytoplasm. The protein localises to the host nucleus. Its function is as follows. Multifunctional regulator of the expression of viral genes that mediates nuclear export of viral intronless mRNAs. This immediate early (EI) protein promotes the nuclear export of viral intronless mRNAs by interacting with mRNAs and host NXF1/TAP. This is mRNA export factor ICP27 homolog from Gallus gallus (Chicken).